A 54-amino-acid chain; its full sequence is MLYYALVFLVVALIAGVLGFGGIAGASASIAQVLFFIFLVLFVVSLVMRLMRKV.

Helical transmembrane passes span 5-25 and 28-48; these read ALVF…GIAG and ASIA…SLVM.

This sequence belongs to the UPF0391 family.

It is found in the cell membrane. The chain is UPF0391 membrane protein pRL90066 from Rhizobium johnstonii (strain DSM 114642 / LMG 32736 / 3841) (Rhizobium leguminosarum bv. viciae).